The primary structure comprises 339 residues: Probable G-protein coupled receptor 33 (339 aa).

Residues 1–30 (MDLINSSTHVINVSTSLTNSTGVPTPAPKT) are Extracellular-facing. 3 N-linked (GlcNAc...) asparagine glycosylation sites follow: Asn5, Asn12, and Asn19. Residues 31–53 (IIAASLFMAFIIGVISNGLYLWM) form a helical membrane-spanning segment. Over 54–64 (LQFKMQRTVNT) the chain is Cytoplasmic. The chain crosses the membrane as a helical span at residues 65 to 86 (LLFFHLILSYFISTLILPFMAT). Residues 87 to 103 (SFLQDNHWVFGSVLCKA) are Extracellular-facing. Cys101 and Cys179 are disulfide-bonded. Residues 104-124 (FNSTLSVSMFASVFFLSAISV) form a helical membrane-spanning segment. The Cytoplasmic segment spans residues 125–143 (ARYYLILHPVWSQQHRTPH). A helical transmembrane segment spans residues 144–165 (WASRIALQIWISATILSIPYLV). Residues 166–209 (FRTTHDDHKGRIKCQNNYIVSTDWESKEHQTLGQWIHAACFVGR) are Extracellular-facing. A helical membrane pass occupies residues 210 to 230 (FLLGFLLPFLVIIFCYKRVAT). The Cytoplasmic portion of the chain corresponds to 231–246 (KMKEKGLFKSSKPFKV). A helical transmembrane segment spans residues 247 to 268 (MVTAVISFFVCWMPYHVHSGLV). Residues 269 to 283 (LTKSQPLPLHLTLGL) are Extracellular-facing. The chain crosses the membrane as a helical span at residues 284 to 303 (AVVTISFNTVVSPVLYLFTG). Residues 304–339 (ENFKVFKKSILALFNSTFSDISSTERTQTLNSETEI) lie on the Cytoplasmic side of the membrane.

Belongs to the G-protein coupled receptor 1 family. In terms of tissue distribution, expressed predominantly in lung, spleen and testis.

The protein localises to the cell membrane. In terms of biological role, orphan receptor; could be a chemoattractant receptor. This Mus musculus (Mouse) protein is Probable G-protein coupled receptor 33 (Gpr33).